Consider the following 53-residue polypeptide: Bowman-Birk type proteinase inhibitor II-4 (53 aa).

Disulfide bonds link C8–C23, C13–C21, C30–C37, and C34–C49.

It belongs to the Bowman-Birk serine protease inhibitor family.

The sequence is that of Bowman-Birk type proteinase inhibitor II-4 from Triticum aestivum (Wheat).